A 156-amino-acid polypeptide reads, in one-letter code: Ribosomal RNA large subunit methyltransferase H (156 aa).

S-adenosyl-L-methionine is bound by residues L73, G104, and L123–L128.

This sequence belongs to the RNA methyltransferase RlmH family. Homodimer.

The protein localises to the cytoplasm. It carries out the reaction pseudouridine(1915) in 23S rRNA + S-adenosyl-L-methionine = N(3)-methylpseudouridine(1915) in 23S rRNA + S-adenosyl-L-homocysteine + H(+). Specifically methylates the pseudouridine at position 1915 (m3Psi1915) in 23S rRNA. The protein is Ribosomal RNA large subunit methyltransferase H of Marinobacter nauticus (strain ATCC 700491 / DSM 11845 / VT8) (Marinobacter aquaeolei).